Here is a 185-residue protein sequence, read N- to C-terminus: V-type proton ATPase subunit E (185 aa).

It belongs to the V-ATPase E subunit family.

Produces ATP from ADP in the presence of a proton gradient across the membrane. The protein is V-type proton ATPase subunit E of Deinococcus deserti (strain DSM 17065 / CIP 109153 / LMG 22923 / VCD115).